Here is a 152-residue protein sequence, read N- to C-terminus: Large ribosomal subunit protein bL9 (152 aa).

Belongs to the bacterial ribosomal protein bL9 family.

Its function is as follows. Binds to the 23S rRNA. This is Large ribosomal subunit protein bL9 from Mycobacterium leprae (strain Br4923).